The following is a 685-amino-acid chain: Serotransferrin (685 aa).

Residues Met1–Ile16 form the signal peptide. Transferrin-like domains are found at residues Val23–Ile329 and Met340–Thr666. A disulfide bridge links Cys26 with Cys48. Residues Asp72 and Tyr102 each coordinate Fe(3+). 3 disulfide bridges follow: Cys125-Cys206, Cys170-Cys184, and Cys234-Cys248. Residues Thr127, Lys131, Ala133, and Gly134 each coordinate hydrogencarbonate. A Fe(3+)-binding site is contributed by Tyr200. His256 contacts Fe(3+). Intrachain disulfides connect Cys343–Cys379 and Cys353–Cys370. Asp394 and Tyr428 together coordinate Fe(3+). 7 cysteine pairs are disulfide-bonded: Cys404/Cys678, Cys419/Cys639, Cys451/Cys526, Cys475/Cys667, Cys485/Cys499, Cys496/Cys509, and Cys566/Cys580. Hydrogencarbonate-binding residues include Thr453, Arg457, Ala459, and Gly460. Asn476 carries an N-linked (GlcNAc...) asparagine glycan. Tyr520 contacts Fe(3+). Residue His588 participates in Fe(3+) binding.

This sequence belongs to the transferrin family. Monomer.

Its subcellular location is the secreted. Functionally, transferrins are iron binding transport proteins which can bind two Fe(3+) ions in association with the binding of an anion, usually bicarbonate. The protein is Serotransferrin (tf) of Paralichthys olivaceus (Bastard halibut).